The sequence spans 441 residues: UDP-N-acetylglucosamine--peptide N-acetylglucosaminyltransferase stabilizing protein GtfB (441 aa).

The protein belongs to the GtfB family. Forms a heterotetramer with 2 subunits each of GtfA and GtfB. Part of the accessory SecA2/SecY2 protein translocation apparatus.

The protein localises to the cell membrane. The protein operates within protein modification; protein glycosylation. Its function is as follows. Required for polymorphic O-glycosylation of the serine-rich repeat protein (SRRP) in this bacteria. A stabilizing protein that is part of the accessory SecA2/SecY2 system specifically required to export serine-rich repeat cell wall proteins encoded in the same operon. The GtfA-GtfB complex adds GlcNAc from UDP-GlcNAc to the substrate protein, attaching the first sugar residue. Stabilizes the glycosylation activity of GtfA. Has no N-acetylglucosaminyl transferase activity on its own. In Limosilactobacillus reuteri subsp. suis (strain ATCC 53608 / LMG 31752 / 1063) (Lactobacillus reuteri), this protein is UDP-N-acetylglucosamine--peptide N-acetylglucosaminyltransferase stabilizing protein GtfB.